Here is a 395-residue protein sequence, read N- to C-terminus: ATP phosphoribosyltransferase regulatory subunit (395 aa).

The protein belongs to the class-II aminoacyl-tRNA synthetase family. HisZ subfamily. In terms of assembly, heteromultimer composed of HisG and HisZ subunits.

It is found in the cytoplasm. It functions in the pathway amino-acid biosynthesis; L-histidine biosynthesis; L-histidine from 5-phospho-alpha-D-ribose 1-diphosphate: step 1/9. Its function is as follows. Required for the first step of histidine biosynthesis. May allow the feedback regulation of ATP phosphoribosyltransferase activity by histidine. This is ATP phosphoribosyltransferase regulatory subunit from Pseudomonas fluorescens (strain Pf0-1).